The following is a 158-amino-acid chain: MQGRLSAWLVKHGLVHRSLGFDYQGIETLQIKPEDWHSIAVISYVYGYNYLRSQCAYDVAPGGLLASVYHLTRIQYGVDQPEEICIKVFTPRKNPRIPSVFWIWKSADFQERESYDMLGISYDNHPRLKRILMPESWIGWPLRKDYIAPNFYEIQDAH.

Belongs to the complex I 30 kDa subunit family. NDH is composed of at least 16 different subunits, 5 of which are encoded in the nucleus.

The protein resides in the plastid. It is found in the chloroplast thylakoid membrane. The catalysed reaction is a plastoquinone + NADH + (n+1) H(+)(in) = a plastoquinol + NAD(+) + n H(+)(out). It catalyses the reaction a plastoquinone + NADPH + (n+1) H(+)(in) = a plastoquinol + NADP(+) + n H(+)(out). Functionally, NDH shuttles electrons from NAD(P)H:plastoquinone, via FMN and iron-sulfur (Fe-S) centers, to quinones in the photosynthetic chain and possibly in a chloroplast respiratory chain. The immediate electron acceptor for the enzyme in this species is believed to be plastoquinone. Couples the redox reaction to proton translocation, and thus conserves the redox energy in a proton gradient. The sequence is that of NAD(P)H-quinone oxidoreductase subunit J, chloroplastic from Buxus microphylla (Littleleaf boxwood).